The primary structure comprises 215 residues: 3-isopropylmalate dehydratase small subunit (215 aa).

It belongs to the LeuD family. LeuD type 1 subfamily. As to quaternary structure, heterodimer of LeuC and LeuD.

The enzyme catalyses (2R,3S)-3-isopropylmalate = (2S)-2-isopropylmalate. It functions in the pathway amino-acid biosynthesis; L-leucine biosynthesis; L-leucine from 3-methyl-2-oxobutanoate: step 2/4. Catalyzes the isomerization between 2-isopropylmalate and 3-isopropylmalate, via the formation of 2-isopropylmaleate. The protein is 3-isopropylmalate dehydratase small subunit of Xanthomonas oryzae pv. oryzae (strain MAFF 311018).